The following is a 567-amino-acid chain: Urease subunit alpha (567 aa).

In terms of domain architecture, Urease spans 129–567; that stretch reads GGIDSHIHFI…LPMAQRYFLF (439 aa). Positions 134, 136, and 217 each coordinate Ni(2+). Position 217 is an N6-carboxylysine (K217). Substrate is bound at residue H219. Residues H246 and H272 each coordinate Ni(2+). H320 acts as the Proton donor in catalysis. Residue D360 participates in Ni(2+) binding.

The protein belongs to the metallo-dependent hydrolases superfamily. Urease alpha subunit family. Heterotrimer of UreA (gamma), UreB (beta) and UreC (alpha) subunits. Three heterotrimers associate to form the active enzyme. Requires Ni cation as cofactor. Carboxylation allows a single lysine to coordinate two nickel ions.

The protein localises to the cytoplasm. It carries out the reaction urea + 2 H2O + H(+) = hydrogencarbonate + 2 NH4(+). Its pathway is nitrogen metabolism; urea degradation; CO(2) and NH(3) from urea (urease route): step 1/1. The chain is Urease subunit alpha from Alcanivorax borkumensis (strain ATCC 700651 / DSM 11573 / NCIMB 13689 / SK2).